A 170-amino-acid polypeptide reads, in one-letter code: NADPH-dependent 7-cyano-7-deazaguanine reductase (170 aa).

Cys-58 serves as the catalytic Thioimide intermediate. The active-site Proton donor is Asp-65. Substrate contacts are provided by residues 80–82 (VES) and 99–100 (HE).

This sequence belongs to the GTP cyclohydrolase I family. QueF type 1 subfamily.

Its subcellular location is the cytoplasm. It catalyses the reaction 7-aminomethyl-7-carbaguanine + 2 NADP(+) = 7-cyano-7-deazaguanine + 2 NADPH + 3 H(+). Its pathway is tRNA modification; tRNA-queuosine biosynthesis. Functionally, catalyzes the NADPH-dependent reduction of 7-cyano-7-deazaguanine (preQ0) to 7-aminomethyl-7-deazaguanine (preQ1). In Bdellovibrio bacteriovorus (strain ATCC 15356 / DSM 50701 / NCIMB 9529 / HD100), this protein is NADPH-dependent 7-cyano-7-deazaguanine reductase.